Here is a 448-residue protein sequence, read N- to C-terminus: Putative carbonic anhydrase 2 (448 aa).

Positions 1–222 constitute an Alpha-carbonic anhydrase domain; sequence AYRQTENLLY…PAERDVFRII (222 aa). A Zn(2+)-binding site is contributed by histidine 19. N-linked (GlcNAc...) asparagine glycans are attached at residues asparagine 139 and asparagine 198. The interval 229-448 is disordered; that stretch reads RREEDDERGD…DKGDDKGDDN (220 aa). Positions 245–280 are enriched in acidic residues; sequence DDDDNYDDDDYYNDDYSNDDYYDDDYYYDDYDDDTD. Composition is skewed to basic and acidic residues over residues 281-334 and 342-354; these read DDHK…DDSG and RDGR…RDRN. An N-linked (GlcNAc...) asparagine glycan is attached at asparagine 314. Residues 357–368 are compositionally biased toward gly residues; the sequence is NGNGRENGGVRG. A compositionally biased stretch (basic and acidic residues) spans 370-379; sequence GNDRDGRRDN. An N-linked (GlcNAc...) asparagine glycan is attached at asparagine 385. Residues 386-421 show a composition bias toward basic and acidic residues; that stretch reads GTRRGNGDDRGGRRNEDRGENRRGKDDQERESEDGR. The span at 422-435 shows a compositional bias: basic residues; the sequence is RRRRRFNGRRRRRG. Residues 436 to 448 are compositionally biased toward basic and acidic residues; sequence RGDDKGDDKGDDN.

It belongs to the alpha-carbonic anhydrase family. In terms of tissue distribution, component of the acid-insoluble and acid-soluble organic matrix of calcified layers of the shell (at protein level).

The protein localises to the secreted. The enzyme catalyses hydrogencarbonate + H(+) = CO2 + H2O. Reversible hydration of carbon dioxide. This is Putative carbonic anhydrase 2 from Lottia gigantea (Giant owl limpet).